Reading from the N-terminus, the 89-residue chain is MPLSGDVKQKIMSDYATVDRDTGSPEVQVAMLTRRISDLTEHLKVHKHDHHSRRGLLLLVGRRRRLLNYLAKTDINRYRALIERLGLRR.

It belongs to the universal ribosomal protein uS15 family. In terms of assembly, part of the 30S ribosomal subunit. Forms a bridge to the 50S subunit in the 70S ribosome, contacting the 23S rRNA.

Its function is as follows. One of the primary rRNA binding proteins, it binds directly to 16S rRNA where it helps nucleate assembly of the platform of the 30S subunit by binding and bridging several RNA helices of the 16S rRNA. In terms of biological role, forms an intersubunit bridge (bridge B4) with the 23S rRNA of the 50S subunit in the ribosome. This is Small ribosomal subunit protein uS15 from Parafrankia sp. (strain EAN1pec).